Reading from the N-terminus, the 326-residue chain is MSNISVIGTGSYVPNNIITNDFLSTIVDTSDEWIRTRTGILERRISKEENTIYMAIESAKEAIKNANIEANDLDLIIVATLTPDNFMPSTACSVQKEIGAINALCFDISAACSGFIYGLEIACSMLKNSFRNKALIIGAENLSKIVDWKDRNTCVLFGDGAGAAILSKTKEEGILEFHSGSNGLKGEHLTCGVLKANNISNKNDRLENDNFIKMNGKEIFRFAVGAMSETICNIQEKTKWDLSEVKYIISHQANSRIIEYTAKKLNTSKDKFYMNLDKYGNTSAASIPIALDEMNKKGLLNKQDKIILVGFGGGLTFGGVAIVWSI.

Catalysis depends on residues cysteine 112 and histidine 251. The segment at 252–256 (QANSR) is ACP-binding. The active site involves asparagine 281.

The protein belongs to the thiolase-like superfamily. FabH family. In terms of assembly, homodimer.

The protein localises to the cytoplasm. It catalyses the reaction malonyl-[ACP] + acetyl-CoA + H(+) = 3-oxobutanoyl-[ACP] + CO2 + CoA. It functions in the pathway lipid metabolism; fatty acid biosynthesis. Catalyzes the condensation reaction of fatty acid synthesis by the addition to an acyl acceptor of two carbons from malonyl-ACP. Catalyzes the first condensation reaction which initiates fatty acid synthesis and may therefore play a role in governing the total rate of fatty acid production. Possesses both acetoacetyl-ACP synthase and acetyl transacylase activities. Its substrate specificity determines the biosynthesis of branched-chain and/or straight-chain of fatty acids. The protein is Beta-ketoacyl-[acyl-carrier-protein] synthase III of Clostridium botulinum (strain 657 / Type Ba4).